Consider the following 54-residue polypeptide: UPF0391 membrane protein Pfl01_0044 (54 aa).

Helical transmembrane passes span 4–24 (WAIT…GGIA) and 29–49 (GIAK…FFFG).

Belongs to the UPF0391 family.

It localises to the cell membrane. This Pseudomonas fluorescens (strain Pf0-1) protein is UPF0391 membrane protein Pfl01_0044.